We begin with the raw amino-acid sequence, 451 residues long: Phosphoglucosamine mutase (451 aa).

The active-site Phosphoserine intermediate is the serine 102. Residues serine 102, aspartate 243, aspartate 245, and aspartate 247 each coordinate Mg(2+). Serine 102 bears the Phosphoserine mark.

This sequence belongs to the phosphohexose mutase family. Mg(2+) serves as cofactor. Activated by phosphorylation.

It carries out the reaction alpha-D-glucosamine 1-phosphate = D-glucosamine 6-phosphate. Functionally, catalyzes the conversion of glucosamine-6-phosphate to glucosamine-1-phosphate. This chain is Phosphoglucosamine mutase, found in Brucella anthropi (strain ATCC 49188 / DSM 6882 / CCUG 24695 / JCM 21032 / LMG 3331 / NBRC 15819 / NCTC 12168 / Alc 37) (Ochrobactrum anthropi).